The sequence spans 30 residues: Cyclotide mden-E (30 aa).

Positions Gly-1–Asn-30 form a cross-link, cyclopeptide (Gly-Asn). 3 disulfide bridges follow: Cys-4-Cys-20, Cys-8-Cys-22, and Cys-13-Cys-27.

Belongs to the cyclotide family. Bracelet subfamily. This is a cyclic peptide.

In terms of biological role, probably participates in a plant defense mechanism. The polypeptide is Cyclotide mden-E (Melicytus dentatus (Tree violet)).